The chain runs to 274 residues: Large ribosomal subunit protein uL2 (274 aa).

The interval 224–256 (VMNPVDHPHGGGEGKTGEGRHPVDPWGNLTKGY) is disordered. The span at 229–246 (DHPHGGGEGKTGEGRHPV) shows a compositional bias: basic and acidic residues.

The protein belongs to the universal ribosomal protein uL2 family. In terms of assembly, part of the 50S ribosomal subunit. Forms a bridge to the 30S subunit in the 70S ribosome.

One of the primary rRNA binding proteins. Required for association of the 30S and 50S subunits to form the 70S ribosome, for tRNA binding and peptide bond formation. It has been suggested to have peptidyltransferase activity; this is somewhat controversial. Makes several contacts with the 16S rRNA in the 70S ribosome. The chain is Large ribosomal subunit protein uL2 from Polaromonas naphthalenivorans (strain CJ2).